Here is a 140-residue protein sequence, read N- to C-terminus: Small ribosomal subunit protein uS19 (140 aa).

The tract at residues 43-71 is disordered; it reads IERGLTTEQQKLRETVRDADPQKTANDPI. The span at 52-63 shows a compositional bias: basic and acidic residues; that stretch reads QKLRETVRDADP.

The protein belongs to the universal ribosomal protein uS19 family.

In terms of biological role, protein S19 forms a complex with S13 that binds strongly to the 16S ribosomal RNA. This is Small ribosomal subunit protein uS19 from Haloquadratum walsbyi (strain DSM 16790 / HBSQ001).